The following is a 151-amino-acid chain: Sigma factor binding protein 1, chloroplastic (151 aa).

Residues 1 to 13 (MESSSSTFLTTTS) are compositionally biased toward low complexity. 2 disordered regions span residues 1–41 (MESS…KPIK) and 66–93 (TGQD…PPAE). Residues 1-54 (MESSSSTFLTTTSLDKKKPSPVSRKSPKQKKKTTSTNKPIKVRYISNPMRVQTC) constitute a chloroplast transit peptide. A Bipartite nuclear localization signal motif is present at residues 16–32 (KKKPSPVSRKSPKQKKK). Positions 58 to 67 (FRELVQELTG) match the VQ motif.

Interacts with the sigma factor SIGA in chloroplast. Interacts with WRKY25 and WRKY33 in the nucleus. Expressed in leaves and roots, but not in flowers.

It localises to the plastid. The protein resides in the chloroplast. Its subcellular location is the nucleus. Functionally, contributes to plant defense. May regulate chloroplast metabolism upon infection with pathogens such as Pseudomonas syringae. Functions as activator of WRKY33 in plant defense against necrotrophic pathogens by stimulating the DNA-binding activity of WRKY33. The polypeptide is Sigma factor binding protein 1, chloroplastic (SIB1) (Arabidopsis thaliana (Mouse-ear cress)).